A 207-amino-acid polypeptide reads, in one-letter code: MDTLIKEFDVALRAIAGATRSARANPADRLAPDTEQMSAEERRHVAGLMRINHVGEVCAQALYQAQKLTARNGAVRAQMDAAAREEEDHLAWCAERLRELGSRPSLLNPLWYAGAFAIGWVAGRAGDRVSLGFVAETERQVEHHLGGHLDRLPESDSRSRAILEQMRDDEIRHGDAAREAGGMPLPAPVRALMRGASRVMTTAAYRI.

The Fe cation site is built by glutamate 56, glutamate 86, histidine 89, glutamate 138, glutamate 170, and histidine 173.

Belongs to the COQ7 family. Fe cation serves as cofactor.

The protein resides in the cell membrane. It catalyses the reaction a 5-methoxy-2-methyl-3-(all-trans-polyprenyl)benzene-1,4-diol + AH2 + O2 = a 3-demethylubiquinol + A + H2O. The protein operates within cofactor biosynthesis; ubiquinone biosynthesis. In terms of biological role, catalyzes the hydroxylation of 2-nonaprenyl-3-methyl-6-methoxy-1,4-benzoquinol during ubiquinone biosynthesis. This is 3-demethoxyubiquinol 3-hydroxylase from Cupriavidus taiwanensis (strain DSM 17343 / BCRC 17206 / CCUG 44338 / CIP 107171 / LMG 19424 / R1) (Ralstonia taiwanensis (strain LMG 19424)).